A 630-amino-acid polypeptide reads, in one-letter code: Biosynthetic arginine decarboxylase (630 aa).

N6-(pyridoxal phosphate)lysine is present on K99. Residue 279-289 coordinates substrate; it reads FDVGGGLGVDY.

It belongs to the Orn/Lys/Arg decarboxylase class-II family. SpeA subfamily. The cofactor is Mg(2+). Requires pyridoxal 5'-phosphate as cofactor.

The catalysed reaction is L-arginine + H(+) = agmatine + CO2. The protein operates within amine and polyamine biosynthesis; agmatine biosynthesis; agmatine from L-arginine: step 1/1. Catalyzes the biosynthesis of agmatine from arginine. This Neisseria meningitidis serogroup B (strain ATCC BAA-335 / MC58) protein is Biosynthetic arginine decarboxylase.